Reading from the N-terminus, the 420-residue chain is uncharacterized protein (420 aa).

The YcaO domain occupies glycine 79 to serine 420.

This is an uncharacterized protein from Rhizobium leguminosarum bv. trifolii.